A 508-amino-acid polypeptide reads, in one-letter code: Photosystem II CP47 reaction center protein (508 aa).

6 helical membrane passes run 21-36, 101-115, 140-156, 203-218, 237-252, and 457-472; these read SVHIMHTALVAGWAGS, IVFSGLCFLAAIWHW, GIHLFLSGVACFGFGAF, IAAGTLGILAGLFHLS, VLSSSIAAVFFAAFVV, and SFALLFFFGHIWHGAR.

It belongs to the PsbB/PsbC family. PsbB subfamily. PSII is composed of 1 copy each of membrane proteins PsbA, PsbB, PsbC, PsbD, PsbE, PsbF, PsbH, PsbI, PsbJ, PsbK, PsbL, PsbM, PsbT, PsbX, PsbY, PsbZ, Psb30/Ycf12, at least 3 peripheral proteins of the oxygen-evolving complex and a large number of cofactors. It forms dimeric complexes. Binds multiple chlorophylls. PSII binds additional chlorophylls, carotenoids and specific lipids. is required as a cofactor.

It is found in the plastid. Its subcellular location is the chloroplast thylakoid membrane. In terms of biological role, one of the components of the core complex of photosystem II (PSII). It binds chlorophyll and helps catalyze the primary light-induced photochemical processes of PSII. PSII is a light-driven water:plastoquinone oxidoreductase, using light energy to abstract electrons from H(2)O, generating O(2) and a proton gradient subsequently used for ATP formation. The chain is Photosystem II CP47 reaction center protein from Morus indica (Mulberry).